The following is a 144-amino-acid chain: 3-dehydroquinate dehydratase (144 aa).

Tyr-22 serves as the catalytic Proton acceptor. Substrate-binding residues include Asn-71, His-77, and Asp-84. Catalysis depends on His-97, which acts as the Proton donor. Substrate contacts are provided by residues 98-99 (IS) and Arg-108.

This sequence belongs to the type-II 3-dehydroquinase family. As to quaternary structure, homododecamer.

The catalysed reaction is 3-dehydroquinate = 3-dehydroshikimate + H2O. Its pathway is metabolic intermediate biosynthesis; chorismate biosynthesis; chorismate from D-erythrose 4-phosphate and phosphoenolpyruvate: step 3/7. In terms of biological role, catalyzes a trans-dehydration via an enolate intermediate. This is 3-dehydroquinate dehydratase from Thermotoga petrophila (strain ATCC BAA-488 / DSM 13995 / JCM 10881 / RKU-1).